We begin with the raw amino-acid sequence, 190 residues long: Guanylate kinase (190 aa).

In terms of domain architecture, Guanylate kinase-like spans 8–188; that stretch reads GRLVILAGPS…AVSAIKAVLL (181 aa). ATP is bound at residue 15–22; it reads GPSAVGKS.

The protein belongs to the guanylate kinase family.

It localises to the cytoplasm. The enzyme catalyses GMP + ATP = GDP + ADP. In terms of biological role, essential for recycling GMP and indirectly, cGMP. This is Guanylate kinase from Corynebacterium efficiens (strain DSM 44549 / YS-314 / AJ 12310 / JCM 11189 / NBRC 100395).